Reading from the N-terminus, the 530-residue chain is Bifunctional purine biosynthesis protein PurH (530 aa).

In terms of domain architecture, MGS-like spans 1–148 (MNNPRPIRRA…KNHKDVTIVV (148 aa)).

The protein belongs to the PurH family.

The catalysed reaction is (6R)-10-formyltetrahydrofolate + 5-amino-1-(5-phospho-beta-D-ribosyl)imidazole-4-carboxamide = 5-formamido-1-(5-phospho-D-ribosyl)imidazole-4-carboxamide + (6S)-5,6,7,8-tetrahydrofolate. It catalyses the reaction IMP + H2O = 5-formamido-1-(5-phospho-D-ribosyl)imidazole-4-carboxamide. Its pathway is purine metabolism; IMP biosynthesis via de novo pathway; 5-formamido-1-(5-phospho-D-ribosyl)imidazole-4-carboxamide from 5-amino-1-(5-phospho-D-ribosyl)imidazole-4-carboxamide (10-formyl THF route): step 1/1. It participates in purine metabolism; IMP biosynthesis via de novo pathway; IMP from 5-formamido-1-(5-phospho-D-ribosyl)imidazole-4-carboxamide: step 1/1. The polypeptide is Bifunctional purine biosynthesis protein PurH (Aliivibrio salmonicida (strain LFI1238) (Vibrio salmonicida (strain LFI1238))).